The primary structure comprises 151 residues: SsrA-binding protein (151 aa).

Belongs to the SmpB family.

It is found in the cytoplasm. Its function is as follows. Required for rescue of stalled ribosomes mediated by trans-translation. Binds to transfer-messenger RNA (tmRNA), required for stable association of tmRNA with ribosomes. tmRNA and SmpB together mimic tRNA shape, replacing the anticodon stem-loop with SmpB. tmRNA is encoded by the ssrA gene; the 2 termini fold to resemble tRNA(Ala) and it encodes a 'tag peptide', a short internal open reading frame. During trans-translation Ala-aminoacylated tmRNA acts like a tRNA, entering the A-site of stalled ribosomes, displacing the stalled mRNA. The ribosome then switches to translate the ORF on the tmRNA; the nascent peptide is terminated with the 'tag peptide' encoded by the tmRNA and targeted for degradation. The ribosome is freed to recommence translation, which seems to be the essential function of trans-translation. The polypeptide is SsrA-binding protein (Lactobacillus acidophilus (strain ATCC 700396 / NCK56 / N2 / NCFM)).